The primary structure comprises 490 residues: UDP-N-acetylmuramate--L-alanine ligase (490 aa).

133–139 contributes to the ATP binding site; it reads GTHGKTS.

It belongs to the MurCDEF family.

It localises to the cytoplasm. The catalysed reaction is UDP-N-acetyl-alpha-D-muramate + L-alanine + ATP = UDP-N-acetyl-alpha-D-muramoyl-L-alanine + ADP + phosphate + H(+). The protein operates within cell wall biogenesis; peptidoglycan biosynthesis. In terms of biological role, cell wall formation. This Saccharopolyspora erythraea (strain ATCC 11635 / DSM 40517 / JCM 4748 / NBRC 13426 / NCIMB 8594 / NRRL 2338) protein is UDP-N-acetylmuramate--L-alanine ligase.